Consider the following 726-residue polypeptide: Catalase-peroxidase (726 aa).

The first 16 residues, methionine 1 to glycine 16, serve as a signal peptide directing secretion. Residues methionine 1–aspartate 26 form a disordered region. Residues tryptophan 96–tyrosine 218 constitute a cross-link (tryptophyl-tyrosyl-methioninium (Trp-Tyr) (with M-244)). Histidine 97 (proton acceptor) is an active-site residue. Positions tyrosine 218–methionine 244 form a cross-link, tryptophyl-tyrosyl-methioninium (Tyr-Met) (with W-96). Position 259 (histidine 259) interacts with heme b.

It belongs to the peroxidase family. Peroxidase/catalase subfamily. In terms of assembly, homodimer or homotetramer. The cofactor is heme b. In terms of processing, formation of the three residue Trp-Tyr-Met cross-link is important for the catalase, but not the peroxidase activity of the enzyme.

It carries out the reaction H2O2 + AH2 = A + 2 H2O. It catalyses the reaction 2 H2O2 = O2 + 2 H2O. In terms of biological role, bifunctional enzyme with both catalase and broad-spectrum peroxidase activity. The protein is Catalase-peroxidase of Rhizobium johnstonii (strain DSM 114642 / LMG 32736 / 3841) (Rhizobium leguminosarum bv. viciae).